The chain runs to 114 residues: Evasin-1 (114 aa).

The N-terminal stretch at 1-20 is a signal peptide; that stretch reads MTFKACIAIITALCAMQVIC. Intrachain disulfides connect C32/C53, C49/C90, C66/C95, and C85/C104. 3 N-linked (GlcNAc...) asparagine glycosylation sites follow: N39, N54, and N62.

It belongs to the evasin C8 family. Monomer.

The protein resides in the secreted. In terms of biological role, salivary chemokine-binding protein which shows chemokine neutralizing activity and binds to host chemokines CCL3, CCL4 and CCL18. Binds to CCL3 with 1:1 stoichiometry. The protein is Evasin-1 of Rhipicephalus sanguineus (Brown dog tick).